The chain runs to 147 residues: UPF0306 protein YhbP (147 aa).

Belongs to the UPF0306 family.

The sequence is that of UPF0306 protein YhbP from Escherichia coli O157:H7.